The sequence spans 264 residues: Glutamate racemase (264 aa).

Substrate contacts are provided by residues 12–13 and 44–45; these read DS and YG. The Proton donor/acceptor role is filled by C76. 77 to 78 is a substrate binding site; that stretch reads NT. The active-site Proton donor/acceptor is C186. 187–188 lines the substrate pocket; that stretch reads TH.

The protein belongs to the aspartate/glutamate racemases family.

It catalyses the reaction L-glutamate = D-glutamate. It participates in cell wall biogenesis; peptidoglycan biosynthesis. Functionally, provides the (R)-glutamate required for cell wall biosynthesis. In Fusobacterium nucleatum subsp. nucleatum (strain ATCC 25586 / DSM 15643 / BCRC 10681 / CIP 101130 / JCM 8532 / KCTC 2640 / LMG 13131 / VPI 4355), this protein is Glutamate racemase.